The following is a 275-amino-acid chain: Subtilisin (275 aa).

Gln2 is a binding site for Ca(2+). The Peptidase S8 domain maps to 5–274 (PYGISQIKAP…KGLINVQAAA (270 aa)). Asp32 acts as the Charge relay system in catalysis. Asp41 contacts Ca(2+). His64 functions as the Charge relay system in the catalytic mechanism. Ca(2+)-binding residues include Leu75, Asn77, Ile79, Val81, Ala169, Tyr171, and Thr174. The active-site Charge relay system is the Ser221.

Belongs to the peptidase S8 family. The cofactor is Ca(2+).

It localises to the secreted. It catalyses the reaction Hydrolysis of proteins with broad specificity for peptide bonds, and a preference for a large uncharged residue in P1. Hydrolyzes peptide amides.. Functionally, subtilisin is an extracellular alkaline serine protease, it catalyzes the hydrolysis of proteins and peptide amides. This chain is Subtilisin (apr), found in Bacillus pumilus (Bacillus mesentericus).